The chain runs to 237 residues: 4-hydroxy-tetrahydrodipicolinate reductase (237 aa).

NAD(+) is bound by residues 11-16 (GASGRM), 92-94 (GTT), and 116-119 (GSNF). Catalysis depends on His-148, which acts as the Proton donor/acceptor. His-149 is a (S)-2,3,4,5-tetrahydrodipicolinate binding site. Residue Lys-152 is the Proton donor of the active site. Position 158-159 (158-159 (GS)) interacts with (S)-2,3,4,5-tetrahydrodipicolinate.

It belongs to the DapB family.

The protein localises to the cytoplasm. The enzyme catalyses (S)-2,3,4,5-tetrahydrodipicolinate + NAD(+) + H2O = (2S,4S)-4-hydroxy-2,3,4,5-tetrahydrodipicolinate + NADH + H(+). The catalysed reaction is (S)-2,3,4,5-tetrahydrodipicolinate + NADP(+) + H2O = (2S,4S)-4-hydroxy-2,3,4,5-tetrahydrodipicolinate + NADPH + H(+). The protein operates within amino-acid biosynthesis; L-lysine biosynthesis via DAP pathway; (S)-tetrahydrodipicolinate from L-aspartate: step 4/4. Its function is as follows. Catalyzes the conversion of 4-hydroxy-tetrahydrodipicolinate (HTPA) to tetrahydrodipicolinate. The protein is 4-hydroxy-tetrahydrodipicolinate reductase of Xylella fastidiosa (strain 9a5c).